Reading from the N-terminus, the 210-residue chain is Na(+)-translocating NADH-quinone reductase subunit D (210 aa).

Helical transmembrane passes span 42–62 (VVMT…ISTI), 66–86 (IPNS…VIVV), 103–123 (VYVG…AFAM), 131–151 (FMDG…VGAF), 154–174 (LFGS…NGGW), and 178–198 (NGLL…IWAV).

It belongs to the NqrDE/RnfAE family. In terms of assembly, composed of six subunits; NqrA, NqrB, NqrC, NqrD, NqrE and NqrF.

It localises to the cell inner membrane. The enzyme catalyses a ubiquinone + n Na(+)(in) + NADH + H(+) = a ubiquinol + n Na(+)(out) + NAD(+). Functionally, NQR complex catalyzes the reduction of ubiquinone-1 to ubiquinol by two successive reactions, coupled with the transport of Na(+) ions from the cytoplasm to the periplasm. NqrA to NqrE are probably involved in the second step, the conversion of ubisemiquinone to ubiquinol. This is Na(+)-translocating NADH-quinone reductase subunit D from Psychromonas ingrahamii (strain DSM 17664 / CCUG 51855 / 37).